We begin with the raw amino-acid sequence, 299 residues long: ATP phosphoribosyltransferase (299 aa).

It belongs to the ATP phosphoribosyltransferase family. Long subfamily. As to quaternary structure, equilibrium between an active dimeric form, an inactive hexameric form and higher aggregates. Interconversion between the various forms is largely reversible and is influenced by the natural substrates and inhibitors of the enzyme. Requires Mg(2+) as cofactor.

Its subcellular location is the cytoplasm. It catalyses the reaction 1-(5-phospho-beta-D-ribosyl)-ATP + diphosphate = 5-phospho-alpha-D-ribose 1-diphosphate + ATP. Its pathway is amino-acid biosynthesis; L-histidine biosynthesis; L-histidine from 5-phospho-alpha-D-ribose 1-diphosphate: step 1/9. With respect to regulation, feedback inhibited by histidine. Its function is as follows. Catalyzes the condensation of ATP and 5-phosphoribose 1-diphosphate to form N'-(5'-phosphoribosyl)-ATP (PR-ATP). Has a crucial role in the pathway because the rate of histidine biosynthesis seems to be controlled primarily by regulation of HisG enzymatic activity. The polypeptide is ATP phosphoribosyltransferase (Salmonella choleraesuis (strain SC-B67)).